We begin with the raw amino-acid sequence, 70 residues long: Large ribosomal subunit protein bL31 (70 aa).

The Zn(2+) site is built by Cys16, Cys18, Cys37, and Cys40.

Belongs to the bacterial ribosomal protein bL31 family. Type A subfamily. In terms of assembly, part of the 50S ribosomal subunit. Zn(2+) serves as cofactor.

Its function is as follows. Binds the 23S rRNA. In Proteus mirabilis (strain HI4320), this protein is Large ribosomal subunit protein bL31.